The chain runs to 198 residues: Pre-histone-like nucleoprotein (198 aa).

S2 carries the N-acetylserine; by host modification. The propeptide occupies 2 to 24 (SILISPSNNTGWGLRFPSKMFGG). Residues 24-55 (GAKKRSDQHPVRVRGHYRAPWGAHKRGRTGRT) form a disordered region. 2 positions are modified to N6-acetyllysine; by host: K27 and K48. A compositionally biased stretch (basic residues) spans 34–52 (VRVRGHYRAPWGAHKRGRT). Phosphothreonine; by host occurs at positions 55 and 74. Phosphoserine; by host occurs at positions 183 and 185. Residues 188–198 (RVPVRTRPPRN) carry the Nuclear localization signal motif.

Belongs to the adenoviridae histone-like nucleoprotein family. As to quaternary structure, interacts with the core-capsid bridging protein; this interaction bridges the virus core to the capsid. Interacts with host NPM1; this interaction might play a role in placing the pre-histone-like nucleoprotein on the viral DNA or regulating viral gene expression. Interacts with host HMGB1; this interaction inhibits host immune response. Cleaved near the N-terminus by the viral protease during virion maturation to form the mature protein.

It is found in the virion. It localises to the host nucleus. The protein localises to the host nucleolus. Its function is as follows. Plays a role in the inhibition of host immune response within the nucleus. Interacts with cellular nucleosomes and immobilizes the host immune danger signal HMGB1 on chromatin. In turn, prevents HMGB1 release out of the cell and thus decreases inflammation. Also plays a role in the wrapping and condensation of the viral DNA. May also promote viral genome import into the nucleus. This is Pre-histone-like nucleoprotein from Human adenovirus C serotype 2 (HAdV-2).